The following is a 179-amino-acid chain: Large ribosomal subunit protein uL6c (179 aa).

Belongs to the universal ribosomal protein uL6 family. Part of the 50S ribosomal subunit.

It localises to the plastid. The protein localises to the chloroplast. Functionally, binds 23S rRNA. The sequence is that of Large ribosomal subunit protein uL6c (rpl6) from Trieres chinensis (Marine centric diatom).